We begin with the raw amino-acid sequence, 565 residues long: SRSF protein kinase 3 (565 aa).

Residues 1 to 44 (MSANAGGSGSVDCGGSSSSSQTSCGPESSGSELTPATPAPRLLQ) are disordered. A compositionally biased stretch (low complexity) spans 10–31 (SVDCGGSSSSSQTSCGPESSGS). Serine 49 is modified (phosphoserine). A Protein kinase domain is found at 78 to 563 (YHVVRKLGWG…AADCLQHPWL (486 aa)). Residues 84–92 (LGWGHFSTV) and lysine 107 each bind ATP. Aspartate 211 acts as the Proton acceptor in catalysis. The span at 236–253 (WQQSGAQPPSRSTVSTAP) shows a compositional bias: polar residues. Disordered stretches follow at residues 236 to 280 (WQQS…KRLL) and 295 to 350 (AAVQ…QTSG). Residues 262 to 277 (SKNKRKKMRRKRKQQK) show a composition bias toward basic residues. Residues 325 to 350 (AGPSPASSSPVPGGERSLSPSSQTSG) are compositionally biased toward low complexity. Serine 328 carries the phosphoserine modification.

The protein belongs to the protein kinase superfamily. CMGC Ser/Thr protein kinase family. As to expression, exclusively expressed in skeletal and heart muscle.

Its subcellular location is the nucleus. It localises to the cytoplasm. It carries out the reaction L-seryl-[protein] + ATP = O-phospho-L-seryl-[protein] + ADP + H(+). The enzyme catalyses L-threonyl-[protein] + ATP = O-phospho-L-threonyl-[protein] + ADP + H(+). Functionally, serine/arginine-rich protein-specific kinase which specifically phosphorylates its substrates at serine residues located in regions rich in arginine/serine dipeptides, known as RS domains. Phosphorylates the SR splicing factor SRSF1 and the lamin-B receptor (LBR) in vitro. Required for normal muscle development. In Mus musculus (Mouse), this protein is SRSF protein kinase 3 (Srpk3).